The primary structure comprises 231 residues: Large ribosomal subunit protein uL1 (231 aa).

The protein belongs to the universal ribosomal protein uL1 family. As to quaternary structure, part of the 50S ribosomal subunit.

Binds directly to 23S rRNA. The L1 stalk is quite mobile in the ribosome, and is involved in E site tRNA release. Functionally, protein L1 is also a translational repressor protein, it controls the translation of the L11 operon by binding to its mRNA. The polypeptide is Large ribosomal subunit protein uL1 (Pseudomonas syringae pv. syringae (strain B728a)).